The following is a 423-amino-acid chain: Citrate synthase-like protein clz17 (423 aa).

Active-site residues include His357 and Asp413.

Belongs to the citrate synthase family.

It participates in secondary metabolite biosynthesis. In terms of biological role, citrate synthase-like protein; part of the gene cluster that mediates the biosynthesis of squalestatin S1 (SQS1, also known as zaragozic acid A), a heavily oxidized fungal polyketide that offers potent cholesterol lowering activity by targeting squalene synthase (SS). SQS1 is composed of a 2,8-dioxobicyclic[3.2.1]octane-3,4,5-tricarboxyclic acid core that is connected to two lipophilic polyketide arms. These initial steps feature the priming of an unusual benzoic acid starter unit onto the highly reducing polyketide synthase clz14, followed by oxaloacetate extension and product release to generate a tricarboxylic acid containing product. The phenylalanine ammonia lyase (PAL) clz10 and the acyl-CoA ligase clz12 are involved in transforming phenylalanine into benzoyl-CoA. The citrate synthase-like protein clz17 is involved in connecting the C-alpha-carbons of the hexaketide chain and oxaloacetate to afford the tricarboxylic acid unit. The potential hydrolytic enzymes, clz11 and clz13, are in close proximity to pks2 and may participate in product release. On the other side, the tetraketide arm is synthesized by a the squalestatin tetraketide synthase clz2 and enzymatically esterified to the core in the last biosynthetic step, by the acetyltransferase clz6. The biosynthesis of the tetraketide must involve 3 rounds of chain extension. After the first and second rounds methyl-transfer occurs, and in all rounds of extension the ketoreductase and dehydratase are active. The enoyl reductase and C-MeT of clz2 are not active in the final round of extension. The acetyltransferase clz6 appears to have a broad substrate selectivity for its acyl CoA substrate, allowing the in vitro synthesis of novel squalestatins. The biosynthesis of SQS1 requires several oxidative steps likely performed by oxidoreductases clz3, clz15 and clz16. Finally, in support of the identification of the cluster as being responsible for SQS1 production, the cluster contains a gene encoding a putative squalene synthase (SS) clz20, suggesting a likely mechanism for self-resistance. This chain is Citrate synthase-like protein clz17, found in Cochliobolus lunatus (Filamentous fungus).